The chain runs to 263 residues: Proteasome subunit beta type-5 (263 aa).

A propeptide spans 1–59 (MALASVLERPLSVNRRGFFGLGGRADLLDLGPGSPSDGLSLAAPSWGVPEEPRIEILHG) (removed in mature form). T60 functions as the Nucleophile in the catalytic mechanism. A108 provides a ligand contact to bortezomib.

It belongs to the peptidase T1B family. In terms of assembly, the 26S proteasome consists of a 20S proteasome core and two 19S regulatory subunits. The 20S proteasome core is a barrel-shaped complex made of 28 subunits that are arranged in four stacked rings. The two outer rings are each formed by seven alpha subunits, and the two inner rings are formed by seven beta subunits. The proteolytic activity is exerted by three beta-subunits PSMB5, PSMB6 and PSMB7. Directly interacts with POMP. Interacts with ABCB1 and TAP1.

Its subcellular location is the cytoplasm. It is found in the nucleus. The enzyme catalyses Cleavage of peptide bonds with very broad specificity.. Component of the 20S core proteasome complex involved in the proteolytic degradation of most intracellular proteins. This complex plays numerous essential roles within the cell by associating with different regulatory particles. Associated with two 19S regulatory particles, forms the 26S proteasome and thus participates in the ATP-dependent degradation of ubiquitinated proteins. The 26S proteasome plays a key role in the maintenance of protein homeostasis by removing misfolded or damaged proteins that could impair cellular functions, and by removing proteins whose functions are no longer required. Associated with the PA200 or PA28, the 20S proteasome mediates ubiquitin-independent protein degradation. This type of proteolysis is required in several pathways including spermatogenesis (20S-PA200 complex) or generation of a subset of MHC class I-presented antigenic peptides (20S-PA28 complex). Within the 20S core complex, PSMB5 displays a chymotrypsin-like activity. The polypeptide is Proteasome subunit beta type-5 (Bos taurus (Bovine)).